The chain runs to 377 residues: Sodium-dependent organic anion transporter (377 aa).

The Extracellular segment spans residues 1–29 (MRANCSSSSACPANSSEEELPVGLEVHGN). N-linked (GlcNAc...) asparagine glycosylation is present at asparagine 4. Residues 30 to 50 (LELVFTVVSTVMMGLLMFSLG) traverse the membrane as a helical segment. Over 51 to 67 (CSVEIRKLWSHIRRPWG) the chain is Cytoplasmic. The chain crosses the membrane as a helical span at residues 68-88 (IAVGLLCQFGLMPFTAYLLAI). The Extracellular portion of the chain corresponds to 89 to 97 (SFSLKPVQA). The chain crosses the membrane as a helical span at residues 98 to 118 (IAVLIMGCCPGGTISNIFTFW). Over 119–133 (VDGDMDLSISMTTCS) the chain is Cytoplasmic. The helical transmembrane segment at 134 to 154 (TVAALGMMPLCIYLYTWSWSL) threads the bilayer. Topologically, residues 155–159 (QQNLT) are extracellular. N-linked (GlcNAc...) asparagine glycosylation occurs at asparagine 157. A helical membrane pass occupies residues 160 to 180 (IPYQNIGITLVCLTIPVAFGV). Topologically, residues 181-195 (YVNYRWPKQSKIILK) are cytoplasmic. Residues 196 to 216 (IGAVVGGVLLLVVAVAGVVLA) traverse the membrane as a helical segment. The Extracellular portion of the chain corresponds to 217–226 (KGSWNSDITL). A helical transmembrane segment spans residues 227–247 (LTISFIFPLIGHVTGFLLALF). Residues 248–266 (THQSWQRCRTISLETGAQN) are Cytoplasmic-facing. The chain crosses the membrane as a helical span at residues 267–285 (IQMCITMLQLSFTAEHLVQ). The Extracellular segment spans residues 286–290 (MLSFP). The helical transmembrane segment at 291 to 311 (LAYGLFQLIDGFLIVAAYQTY) threads the bilayer. Over 312–377 (KRRLKNKHGK…EPVGHITSCE (66 aa)) the chain is Cytoplasmic.

It belongs to the bile acid:sodium symporter (BASS) (TC 2.A.28) family. In terms of processing, glycosylated. In terms of tissue distribution, highly expressed in testis, placenta and pancreas. Moderately expressed in heart, lung and mammary gland. Weakly expressed in brain, colon, kidney, liver, ovary, prostate, small intestine, spleen and thymus.

The protein resides in the membrane. The enzyme catalyses estrone 3-sulfate(out) + 2 Na(+)(out) = estrone 3-sulfate(in) + 2 Na(+)(in). It carries out the reaction 17beta-estradiol 3-sulfate(out) + 2 Na(+)(out) = 17beta-estradiol 3-sulfate(in) + 2 Na(+)(in). It catalyses the reaction dehydroepiandrosterone 3-sulfate(out) + 2 Na(+)(out) = dehydroepiandrosterone 3-sulfate(in) + 2 Na(+)(in). The catalysed reaction is androst-5-ene-diol 3-sulfate(out) + 2 Na(+)(out) = androst-5-ene-diol 3-sulfate(in) + 2 Na(+)(in). The enzyme catalyses pregnenolone sulfate(out) + 2 Na(+)(out) = pregnenolone sulfate(in) + 2 Na(+)(in). It carries out the reaction taurolithocholate 3-sulfate(out) + 2 Na(+)(out) = taurolithocholate 3-sulfate(in) + 2 Na(+)(in). It catalyses the reaction androsterone 3alpha-sulfate(out) + 2 Na(+)(out) = androsterone 3alpha-sulfate(in) + 2 Na(+)(in). The catalysed reaction is 5alpha-dihydrotestosterone sulfate(out) + 2 Na(+)(out) = 5alpha-dihydrotestosterone sulfate(in) + 2 Na(+)(in). The enzyme catalyses 17beta-estradiol 17-sulfate(out) + 2 Na(+)(out) = 17beta-estradiol 17-sulfate(in) + 2 Na(+)(in). It carries out the reaction 17alpha-hydroxypregnenolone 3-sulfate(out) + 2 Na(+)(out) = 17alpha-hydroxypregnenolone 3-sulfate(in) + 2 Na(+)(in). It catalyses the reaction epiandrosterone 3-sulfate(out) + 2 Na(+)(out) = epiandrosterone 3-sulfate(in) + 2 Na(+)(in). The catalysed reaction is epitestosterone 17-sulfate(out) + 2 Na(+)(out) = epitestosterone 17-sulfate(in) + 2 Na(+)(in). The enzyme catalyses testosterone 17-sulfate(out) + 2 Na(+)(out) = testosterone 17-sulfate(in) + 2 Na(+)(in). It carries out the reaction 16alpha-hydroxydehydroepiandrosterone 3-sulfate(out) + 2 Na(+)(out) = 16alpha-hydroxydehydroepiandrosterone 3-sulfate(in) + 2 Na(+)(in). Its function is as follows. Transports sulfoconjugated steroid hormones from the extracellular compartment into the cytosol in a sodium-dependent manner without hydrolysis. Steroid sulfate hormones are commonly considered to be biologically inactive metabolites, that may be activated by steroid sulfatases into free steroids. May play an important role by delivering sulfoconjugated steroids to specific target cells in reproductive organs. May play a role transporting the estriol precursor 16alpha-hydroxydehydroepiandrosterone 3-sulfate (16a-OH-DHEAS) at the fetal blood vessel endothelium. Can also transport other sulfoconjugated molecules such as taurolithocholic acid-3-sulfate and sulfoconjugated pyrenes. This Homo sapiens (Human) protein is Sodium-dependent organic anion transporter (SLC10A6).